Consider the following 467-residue polypeptide: 5-phosphohydroxy-L-lysine phospho-lyase (467 aa).

Lys-278 carries the N6-(pyridoxal phosphate)lysine modification.

This sequence belongs to the class-III pyridoxal-phosphate-dependent aminotransferase family. Homotetramer. Pyridoxal 5'-phosphate is required as a cofactor.

It localises to the mitochondrion. It carries out the reaction (5R)-5-phosphooxy-L-lysine + H2O = (S)-2-amino-6-oxohexanoate + NH4(+) + phosphate. Its function is as follows. Catalyzes the pyridoxal-phosphate-dependent breakdown of 5-phosphohydroxy-L-lysine, converting it to ammonia, inorganic phosphate and 2-aminoadipate semialdehyde. The sequence is that of 5-phosphohydroxy-L-lysine phospho-lyase (Phykpl) from Mus musculus (Mouse).